A 121-amino-acid polypeptide reads, in one-letter code: uncharacterized protein (121 aa).

This is an uncharacterized protein from Ictaluridae (bullhead catfishes).